The sequence spans 575 residues: Transcription factor E3 (575 aa).

Serine 47 carries the post-translational modification Phosphoserine; by MTOR. Over residues alanine 90–glutamine 126 the composition is skewed to low complexity. A disordered region spans residues alanine 90–serine 153. Positions glutamate 127–glutamine 136 are enriched in basic and acidic residues. Arginine 188 carries the asymmetric dimethylarginine modification. A disordered region spans residues leucine 211–serine 246. Positions glutamate 260–leucine 271 are strong transcription activation domain. Phosphoserine; by MTOR is present on serine 321. Lysine 339 participates in a covalent cross-link: Glycyl lysine isopeptide (Lys-Gly) (interchain with G-Cter in SUMO2). Residues glutamine 346–leucine 399 enclose the bHLH domain. Positions arginine 356–arginine 359 match the Nuclear localization signal motif. Positions leucine 409–leucine 430 are leucine-zipper. Disordered stretches follow at residues glycine 473–aspartate 498 and glycine 534–serine 575. The segment covering glycine 539–serine 575 has biased composition (low complexity). Phosphoserine is present on residues serine 542, serine 548, serine 554, serine 556, serine 560, and serine 568.

Belongs to the MiT/TFE family. In terms of assembly, homodimer and heterodimer; with TFEB or MITF. Interacts with RRAGC/RagC GDP-bound and RRAGD/RagD GDP-bound; promoting its recruitment to lysosomal membrane in the presence of nutrients. Interacts with TSC22D1; the interaction is enhanced in the presence of TGF-beta. Post-translationally, sumoylated; does not affect dimerization with MITF. In terms of processing, phosphorylation ar Ser-47 and Ser-321 by MTOR via non-canonical mTORC1 pathway regulates its stability and subcellular location, respectively. When nutrients are present, phosphorylation by MTOR at Ser-47 promotes ubiquitination by the SCF(BTRC) complex, followed by degradation. When nutrients are present, phosphorylation by MTOR at Ser-321 also promotes association with 14-3-3/YWHA adapters and retention in the cytosol. Phosphorylation at Ser-47 plays a more critical role than phosphorylation at Ser-321 for TFE3 inactivation. Inhibition of mTORC1, starvation and lysosomal disruption, promotes dephosphorylation and transcription factor activity. Ubiquitinated by the SCF(BTRC) and SCF(FBXW11) complexes following phosphorylation at Ser-47 by MTOR, leading to its degradation by the proteasome. Ubiquitous in fetal and adult tissues.

It is found in the cytoplasm. The protein resides in the cytosol. It localises to the nucleus. The protein localises to the lysosome membrane. Functionally, transcription factor that acts as a master regulator of lysosomal biogenesis and immune response. Specifically recognizes and binds E-box sequences (5'-CANNTG-3'); efficient DNA-binding requires dimerization with itself or with another MiT/TFE family member such as TFEB or MITF. Involved in the cellular response to amino acid availability by acting downstream of MTOR: in the presence of nutrients, TFE3 phosphorylation by MTOR promotes its inactivation. Upon starvation or lysosomal stress, inhibition of MTOR induces TFE3 dephosphorylation, resulting in transcription factor activity. Specifically recognizes and binds the CLEAR-box sequence (5'-GTCACGTGAC-3') present in the regulatory region of many lysosomal genes, leading to activate their expression, thereby playing a central role in expression of lysosomal genes. Maintains the pluripotent state of embryonic stem cells by promoting the expression of genes such as ESRRB; mTOR-dependent TFE3 cytosolic retention and inactivation promotes exit from pluripotency. Required to maintain the naive pluripotent state of hematopoietic stem cell; mTOR-dependent cytoplasmic retention of TFE3 promotes the exit of hematopoietic stem cell from pluripotency. TFE3 activity is also involved in the inhibition of neuronal progenitor differentiation. Acts as a positive regulator of browning of adipose tissue by promoting expression of target genes; mTOR-dependent phosphorylation promotes cytoplasmic retention of TFE3 and inhibits browning of adipose tissue. In association with TFEB, activates the expression of CD40L in T-cells, thereby playing a role in T-cell-dependent antibody responses in activated CD4(+) T-cells and thymus-dependent humoral immunity. Specifically recognizes the MUE3 box, a subset of E-boxes, present in the immunoglobulin enhancer. It also binds very well to a USF/MLTF site. Promotes TGF-beta-induced transcription of COL1A2; via its interaction with TSC22D1 at E-boxes in the gene proximal promoter. May regulate lysosomal positioning in response to nutrient deprivation by promoting the expression of PIP4P1. The polypeptide is Transcription factor E3 (Homo sapiens (Human)).